The chain runs to 541 residues: Exopolysaccharide phosphotransferase SCO6021 (541 aa).

It belongs to the stealth family.

This chain is Exopolysaccharide phosphotransferase SCO6021, found in Streptomyces coelicolor (strain ATCC BAA-471 / A3(2) / M145).